A 326-amino-acid chain; its full sequence is ATP synthase gamma chain (326 aa).

This sequence belongs to the ATPase gamma chain family. F-type ATPases have 2 components, CF(1) - the catalytic core - and CF(0) - the membrane proton channel. CF(1) has five subunits: alpha(3), beta(3), gamma(1), delta(1), epsilon(1). CF(0) has three main subunits: a, b and c.

The protein resides in the cell membrane. Its function is as follows. Produces ATP from ADP in the presence of a proton gradient across the membrane. The gamma chain is believed to be important in regulating ATPase activity and the flow of protons through the CF(0) complex. The protein is ATP synthase gamma chain of Rhodococcus jostii (strain RHA1).